The primary structure comprises 462 residues: Probable peptidoglycan glycosyltransferase FtsW (462 aa).

The interval 1–28 (MREPRHVPQLRASGRRFPQRGRRHRFGK) is disordered. The Cytoplasmic segment spans residues 1 to 92 (MREPRHVPQL…RSRMLDFDYS (92 aa)). Over residues 13–27 (SGRRFPQRGRRHRFG) the composition is skewed to basic residues. The helical transmembrane segment at 93 to 113 (LLWVSIALLGLGVVMVYSASI) threads the bilayer. Over 114 to 127 (AMPDSPKYASYHDY) the chain is Periplasmic. The chain crosses the membrane as a helical span at residues 128-148 (AFLLRHCVSLVVAFVAAVIAF). Residues 149–158 (RVPVSTWDKY) are Cytoplasmic-facing. A helical transmembrane segment spans residues 159-179 (APHLFLIALVGLVIVLIPHIG). At 180–192 (KGVNGARRWIPLG) the chain is on the periplasmic side. Residues 193-215 (ITNMQPSEIMKLAVTIYAANYTV) form a helical membrane-spanning segment. Residues 216–223 (RKQEYMQS) lie on the Cytoplasmic side of the membrane. The helical transmembrane segment at 224-244 (FAKGFLPMAFAVGLVGALLLL) threads the bilayer. Residues 245–247 (EPD) are Periplasmic-facing. The chain crosses the membrane as a helical span at residues 248–268 (MGAFMVVAAIAMGVLFLGGVN). Residues 269–270 (GK) are Cytoplasmic-facing. A helical transmembrane segment spans residues 271-291 (LFGGLVATAVGTFTMLVWLSP). The Periplasmic segment spans residues 292 to 349 (WRRERIFAYLDPWDERYAQGKAYQLTHSLIAFGRGEWFGVGLGGSVEKLNYLPEAHTD). The helical transmembrane segment at 350 to 370 (FILAVIGEELGFVGVLVVILL) threads the bilayer. Over 371 to 398 (FYWIVRRSFEIGRQALALDRTFAGLMAK) the chain is Cytoplasmic. Residues 399 to 419 (GVGIWFGAQAFINMGVNLGLL) traverse the membrane as a helical segment. Residues 420–425 (PTKGLT) lie on the Periplasmic side of the membrane. Residues 426–446 (LPLVSYGGSGILLNCISLAVL) traverse the membrane as a helical segment. The Cytoplasmic segment spans residues 447–462 (LRVDYENRVLMRGGKV).

The protein belongs to the SEDS family. FtsW subfamily.

It localises to the cell inner membrane. The catalysed reaction is [GlcNAc-(1-&gt;4)-Mur2Ac(oyl-L-Ala-gamma-D-Glu-L-Lys-D-Ala-D-Ala)](n)-di-trans,octa-cis-undecaprenyl diphosphate + beta-D-GlcNAc-(1-&gt;4)-Mur2Ac(oyl-L-Ala-gamma-D-Glu-L-Lys-D-Ala-D-Ala)-di-trans,octa-cis-undecaprenyl diphosphate = [GlcNAc-(1-&gt;4)-Mur2Ac(oyl-L-Ala-gamma-D-Glu-L-Lys-D-Ala-D-Ala)](n+1)-di-trans,octa-cis-undecaprenyl diphosphate + di-trans,octa-cis-undecaprenyl diphosphate + H(+). Its pathway is cell wall biogenesis; peptidoglycan biosynthesis. Functionally, peptidoglycan polymerase that is essential for cell division. The polypeptide is Probable peptidoglycan glycosyltransferase FtsW (Burkholderia thailandensis (strain ATCC 700388 / DSM 13276 / CCUG 48851 / CIP 106301 / E264)).